The chain runs to 266 residues: MNKPIGVIDSGVGGLTVAKEIIRQLPNETIYYLGDSARCPYGPREGDEVRKFTVQLAQKLMEFDIKMLVIACNTATAVALDTLKELLPIPVIGVIEPGSRTAIMTTKNNNVMVLGTEGTIKSEAYTKHIKAINPHVDVTGVACPDFVPLVEQMRYHDPVPTNIVIHQTLKNYRTNKADTVILGCTHYPLLFEPLHDYFGGSKTVISSGLETAREVSALLTFSNEHAPYTPNTKHRFFATGDTEHIEYIISQWLKIDDVEVTQVKVD.

Substrate contacts are provided by residues 9-10 and 41-42; these read DS and YG. Residue Cys72 is the Proton donor/acceptor of the active site. 73 to 74 is a binding site for substrate; that stretch reads NT. The active-site Proton donor/acceptor is Cys184. 185 to 186 is a binding site for substrate; the sequence is TH.

It belongs to the aspartate/glutamate racemases family.

It catalyses the reaction L-glutamate = D-glutamate. It functions in the pathway cell wall biogenesis; peptidoglycan biosynthesis. Its function is as follows. Provides the (R)-glutamate required for cell wall biosynthesis. This chain is Glutamate racemase, found in Staphylococcus carnosus (strain TM300).